A 205-amino-acid chain; its full sequence is Thiamine-phosphate synthase (205 aa).

4-amino-2-methyl-5-(diphosphooxymethyl)pyrimidine is bound by residues 35 to 39 and Asn-67; that span reads QYRDK. Asp-68 and Asp-86 together coordinate Mg(2+). Residue Thr-105 participates in 4-amino-2-methyl-5-(diphosphooxymethyl)pyrimidine binding. 132–134 provides a ligand contact to 2-[(2R,5Z)-2-carboxy-4-methylthiazol-5(2H)-ylidene]ethyl phosphate; the sequence is SLT. Lys-135 lines the 4-amino-2-methyl-5-(diphosphooxymethyl)pyrimidine pocket. Gly-162 lines the 2-[(2R,5Z)-2-carboxy-4-methylthiazol-5(2H)-ylidene]ethyl phosphate pocket.

It belongs to the thiamine-phosphate synthase family. Mg(2+) is required as a cofactor.

It catalyses the reaction 2-[(2R,5Z)-2-carboxy-4-methylthiazol-5(2H)-ylidene]ethyl phosphate + 4-amino-2-methyl-5-(diphosphooxymethyl)pyrimidine + 2 H(+) = thiamine phosphate + CO2 + diphosphate. The catalysed reaction is 2-(2-carboxy-4-methylthiazol-5-yl)ethyl phosphate + 4-amino-2-methyl-5-(diphosphooxymethyl)pyrimidine + 2 H(+) = thiamine phosphate + CO2 + diphosphate. The enzyme catalyses 4-methyl-5-(2-phosphooxyethyl)-thiazole + 4-amino-2-methyl-5-(diphosphooxymethyl)pyrimidine + H(+) = thiamine phosphate + diphosphate. It participates in cofactor biosynthesis; thiamine diphosphate biosynthesis; thiamine phosphate from 4-amino-2-methyl-5-diphosphomethylpyrimidine and 4-methyl-5-(2-phosphoethyl)-thiazole: step 1/1. In terms of biological role, condenses 4-methyl-5-(beta-hydroxyethyl)thiazole monophosphate (THZ-P) and 2-methyl-4-amino-5-hydroxymethyl pyrimidine pyrophosphate (HMP-PP) to form thiamine monophosphate (TMP). This is Thiamine-phosphate synthase from Pseudomonas savastanoi pv. phaseolicola (strain 1448A / Race 6) (Pseudomonas syringae pv. phaseolicola (strain 1448A / Race 6)).